Here is a 447-residue protein sequence, read N- to C-terminus: Na(+)-translocating NADH-quinone reductase subunit A (447 aa).

The protein belongs to the NqrA family. In terms of assembly, composed of six subunits; NqrA, NqrB, NqrC, NqrD, NqrE and NqrF.

The catalysed reaction is a ubiquinone + n Na(+)(in) + NADH + H(+) = a ubiquinol + n Na(+)(out) + NAD(+). Functionally, NQR complex catalyzes the reduction of ubiquinone-1 to ubiquinol by two successive reactions, coupled with the transport of Na(+) ions from the cytoplasm to the periplasm. NqrA to NqrE are probably involved in the second step, the conversion of ubisemiquinone to ubiquinol. In Neisseria meningitidis serogroup B (strain ATCC BAA-335 / MC58), this protein is Na(+)-translocating NADH-quinone reductase subunit A.